Here is a 46-residue protein sequence, read N- to C-terminus: Hellethionin-D (46 aa).

Intrachain disulfides connect Cys3/Cys40, Cys4/Cys32, Cys12/Cys30, and Cys16/Cys26.

The protein belongs to the plant thionin (TC 1.C.44) family. 4 C-C subfamily.

Its subcellular location is the secreted. Thionins are small plant proteins which are toxic to animal cells. They seem to exert their toxic effect at the level of the cell membrane. Their precise function is not known. The polypeptide is Hellethionin-D (Helleborus purpurascens (Purple hellebore)).